The following is a 307-amino-acid chain: Undecaprenyl-diphosphatase 2 (307 aa).

8 consecutive transmembrane segments (helical) span residues glycine 19–phenylalanine 41, isoleucine 56–tryptophan 76, phenylalanine 117–phenylalanine 137, leucine 144–phenylalanine 164, isoleucine 208–leucine 228, alanine 229–serine 249, valine 251–valine 271, and isoleucine 285–valine 305.

This sequence belongs to the UppP family.

Its subcellular location is the cell membrane. The catalysed reaction is di-trans,octa-cis-undecaprenyl diphosphate + H2O = di-trans,octa-cis-undecaprenyl phosphate + phosphate + H(+). In terms of biological role, catalyzes the dephosphorylation of undecaprenyl diphosphate (UPP). Confers resistance to bacitracin. The sequence is that of Undecaprenyl-diphosphatase 2 from Clostridium acetobutylicum (strain ATCC 824 / DSM 792 / JCM 1419 / IAM 19013 / LMG 5710 / NBRC 13948 / NRRL B-527 / VKM B-1787 / 2291 / W).